A 130-amino-acid chain; its full sequence is Holo-[acyl-carrier-protein] synthase (130 aa).

The Mg(2+) site is built by D9 and E58.

The protein belongs to the P-Pant transferase superfamily. AcpS family. Requires Mg(2+) as cofactor.

It is found in the cytoplasm. It catalyses the reaction apo-[ACP] + CoA = holo-[ACP] + adenosine 3',5'-bisphosphate + H(+). Functionally, transfers the 4'-phosphopantetheine moiety from coenzyme A to a Ser of acyl-carrier-protein. This is Holo-[acyl-carrier-protein] synthase from Mycobacterium tuberculosis (strain CDC 1551 / Oshkosh).